Here is a 196-residue protein sequence, read N- to C-terminus: MLIRKAEVRRQTRETEIRVQLQVDGTGEYALDTGVPFLEHMLALTAKFSGFDLQIRARGDLDVDDHHTVEDVGICLGEALVKALGDKAGIGRFGHAIVPMDDALALVAVDLSGRGYLAFDVPMPSPQVGRFDTELVEEFLRALAYNGRFNLHVRLLAGANTHHIIEAVFKGLGVALGSAARINAQRGVPSTKGVIN.

Belongs to the imidazoleglycerol-phosphate dehydratase family.

The protein resides in the cytoplasm. The enzyme catalyses D-erythro-1-(imidazol-4-yl)glycerol 3-phosphate = 3-(imidazol-4-yl)-2-oxopropyl phosphate + H2O. Its pathway is amino-acid biosynthesis; L-histidine biosynthesis; L-histidine from 5-phospho-alpha-D-ribose 1-diphosphate: step 6/9. The polypeptide is Imidazoleglycerol-phosphate dehydratase (Desulforudis audaxviator (strain MP104C)).